A 718-amino-acid chain; its full sequence is Glycine--tRNA ligase beta subunit (718 aa).

It belongs to the class-II aminoacyl-tRNA synthetase family. In terms of assembly, tetramer of two alpha and two beta subunits.

The protein resides in the cytoplasm. It carries out the reaction tRNA(Gly) + glycine + ATP = glycyl-tRNA(Gly) + AMP + diphosphate. The sequence is that of Glycine--tRNA ligase beta subunit from Mesorhizobium japonicum (strain LMG 29417 / CECT 9101 / MAFF 303099) (Mesorhizobium loti (strain MAFF 303099)).